The primary structure comprises 397 residues: Ribosomal RNA large subunit methyltransferase I (397 aa).

Residues Thr2–Lys82 form the PUA domain.

This sequence belongs to the methyltransferase superfamily. RlmI family.

It localises to the cytoplasm. The enzyme catalyses cytidine(1962) in 23S rRNA + S-adenosyl-L-methionine = 5-methylcytidine(1962) in 23S rRNA + S-adenosyl-L-homocysteine + H(+). Functionally, specifically methylates the cytosine at position 1962 (m5C1962) of 23S rRNA. The polypeptide is Ribosomal RNA large subunit methyltransferase I (Photobacterium profundum (strain SS9)).